We begin with the raw amino-acid sequence, 469 residues long: tRNA (cytosine(72)-C(5))-methyltransferase NSUN6 (469 aa).

The 93-residue stretch at 111–203 (QCEAIVGAQC…MGIRMTEPVY (93 aa)) folds into the PUA domain. S-adenosyl-L-methionine-binding positions include 242 to 248 (CAAPGGK), Asp266, Asp293, and Asp323. Cys373 (nucleophile) is an active-site residue. Residue Lys419 is modified to N6-acetyllysine.

This sequence belongs to the class I-like SAM-binding methyltransferase superfamily. RsmB/NOP family.

The protein localises to the cytoplasm. The catalysed reaction is cytidine(72) in tRNA(Thr) + S-adenosyl-L-methionine = 5-methylcytidine(72) in tRNA(Thr) + S-adenosyl-L-homocysteine + H(+). It carries out the reaction cytidine(72) in tRNA(Cys) + S-adenosyl-L-methionine = 5-methylcytidine(72) in tRNA(Cys) + S-adenosyl-L-homocysteine + H(+). Its function is as follows. S-adenosyl-L-methionine-dependent methyltransferase that specifically methylates the C5 position of cytosine 72 in tRNA(Thr)(TGT) and tRNA(Cys)(GCA). In vitro also methylates tRNA(Thr)(AGT). Methylation requires, in the acceptor stem region, the presence of the 3'-CCA terminus, the target site C72, the discriminator base U73, and the second and third base pairs (2:71 and 3:70) in the tRNA substrates. The polypeptide is tRNA (cytosine(72)-C(5))-methyltransferase NSUN6 (Homo sapiens (Human)).